A 135-amino-acid chain; its full sequence is Fatty acid-binding protein 5 (135 aa).

Residue Ala-2 is modified to N-acetylalanine. Lys-17 carries the post-translational modification N6-acetyllysine. The Nuclear localization signal signature appears at 24-34 (KELGVGIALRK). N-eicosanoyl ethanolamine-binding residues include Cys-43 and Arg-109. A disulfide bond links Cys-120 and Cys-127. 129-131 (RIY) contacts (9Z,12Z)-octadecadienoate. Residue Tyr-131 coordinates N-eicosanoyl ethanolamine. Tyr-131 provides a ligand contact to hexadecanoate. Tyr-131 carries the post-translational modification Phosphotyrosine.

The protein belongs to the calycin superfamily. Fatty-acid binding protein (FABP) family. Monomer. Homodimer. As to expression, keratinocytes; highly expressed in psoriatic skin. Expressed in brain gray matter.

The protein localises to the cytoplasm. It is found in the nucleus. The protein resides in the synapse. It localises to the postsynaptic density. Its subcellular location is the secreted. It catalyses the reaction hexadecanoate(out) = hexadecanoate(in). The enzyme catalyses (9Z,12Z)-octadecadienoate(out) = (9Z,12Z)-octadecadienoate(in). It carries out the reaction (9Z)-octadecenoate(out) = (9Z)-octadecenoate(in). Intracellular carrier for long-chain fatty acids and related active lipids, such as endocannabinoids, that regulate the metabolism and actions of the ligands they bind. In addition to the cytosolic transport, selectively delivers specific fatty acids from the cytosol to the nucleus, wherein they activate nuclear receptors. Delivers retinoic acid to the nuclear receptor peroxisome proliferator-activated receptor delta; which promotes proliferation and survival. May also serve as a synaptic carrier of endocannabinoid at central synapses and thus controls retrograde endocannabinoid signaling. Modulates inflammation by regulating PTGES induction via NF-kappa-B activation, and prostaglandin E2 (PGE2) biosynthesis during inflammation. May be involved in keratinocyte differentiation. The chain is Fatty acid-binding protein 5 from Homo sapiens (Human).